A 188-amino-acid polypeptide reads, in one-letter code: Probable nicotinate-nucleotide adenylyltransferase (188 aa).

This sequence belongs to the NadD family.

The catalysed reaction is nicotinate beta-D-ribonucleotide + ATP + H(+) = deamido-NAD(+) + diphosphate. It functions in the pathway cofactor biosynthesis; NAD(+) biosynthesis; deamido-NAD(+) from nicotinate D-ribonucleotide: step 1/1. Functionally, catalyzes the reversible adenylation of nicotinate mononucleotide (NaMN) to nicotinic acid adenine dinucleotide (NaAD). The sequence is that of Probable nicotinate-nucleotide adenylyltransferase from Listeria innocua serovar 6a (strain ATCC BAA-680 / CLIP 11262).